The following is a 788-amino-acid chain: Integrin beta-6 (788 aa).

The first 21 residues, 1–21, serve as a signal peptide directing secretion; sequence MGIELLCFFFLFLGRDDHVRG. Residues 22–71 enclose the PSI domain; sequence GCAMEGAETCGDCLLIGPQCAWCSQENFTHPSGVSERCDTPANLLAKGCQ. Over 22-709 the chain is Extracellular; that stretch reads GCAMEGAETC…KDCPKPPNIP (688 aa). 19 disulfide bridges follow: Cys-23/Cys-41, Cys-31/Cys-454, Cys-34/Cys-59, Cys-44/Cys-70, Cys-197/Cys-204, Cys-252/Cys-293, Cys-394/Cys-406, Cys-426/Cys-452, Cys-456/Cys-476, Cys-467/Cys-479, Cys-481/Cys-490, Cys-492/Cys-519, Cys-502/Cys-517, Cys-511/Cys-522, Cys-524/Cys-537, Cys-539/Cys-560, Cys-544/Cys-558, Cys-552/Cys-563, and Cys-565/Cys-574. N-linked (GlcNAc...) asparagine glycans are attached at residues Asn-48 and Asn-97. The VWFA domain maps to 131-371; it reads YPVDLYYLMD…QLIISAYEEL (241 aa). Positions 140, 142, and 144 each coordinate Mg(2+). Residues Ser-144, Asp-147, Asp-148, and Glu-179 each contribute to the Ca(2+) site. Ca(2+)-binding residues include Asn-235, Asp-237, Pro-239, and Glu-240. A Mg(2+)-binding site is contributed by Glu-240. Asn-260 carries an N-linked (GlcNAc...) asparagine glycan. Asp-271 and Lys-355 together coordinate Ca(2+). 3 N-linked (GlcNAc...) asparagine glycosylation sites follow: Asn-387, Asn-396, and Asn-418. I-EGF domains follow at residues 456–491, 492–538, 539–575, and 576–615; these read CQKEVEVNSSKCHNGNGSYQCGVCACNPGHMGPHCE, CGED…PYCQ, CDNFSCVRHKGLLCGDNGDCECGECVCRSGWTGEYCN, and CTTSTDTCISEDGTLCSGRGDCVCGKCVCTNPGASGPTCE. N-linked (GlcNAc...) asparagine glycosylation is found at Asn-463 and Asn-471. The N-linked (GlcNAc...) asparagine glycan is linked to Asn-541. N-linked (GlcNAc...) asparagine glycosylation occurs at Asn-575. 9 disulfides stabilise this stretch: Cys-576–Cys-599, Cys-583–Cys-597, Cys-591–Cys-602, Cys-604–Cys-614, Cys-617–Cys-620, Cys-624–Cys-670, Cys-630–Cys-649, Cys-633–Cys-645, and Cys-678–Cys-702. A glycan (N-linked (GlcNAc...) asparagine) is linked at Asn-696. A helical membrane pass occupies residues 710-730; sequence MIMLGVSLAILLIGVVLLCIW. Residues 731 to 758 are interaction with HAX1; that stretch reads KLLVSFHDRKEVAKFEAERSKAKWQTGT. Topologically, residues 731 to 788 are cytoplasmic; the sequence is KLLVSFHDRKEVAKFEAERSKAKWQTGTNPLYRGSTSTFKNVTYKHRDKLKTDLSTDG.

The protein belongs to the integrin beta chain family. In terms of assembly, heterodimer of an alpha and a beta subunit. Interacts with FLNB. Interacts with HAX1. ITGAV:ITGB6 interacts with FBN1. ITGAV:ITGB6 interacts with TGFB1.

Its subcellular location is the cell membrane. The protein resides in the cell junction. The protein localises to the focal adhesion. In terms of biological role, integrin alpha-V:beta-6 (ITGAV:ITGB6) is a receptor for fibronectin and cytotactin. It recognizes the sequence R-G-D in its ligands. ITGAV:ITGB6 acts as a receptor for fibrillin-1 (FBN1) and mediates R-G-D-dependent cell adhesion to FBN1. Integrin alpha-V:beta-6 (ITGAV:ITGB6) mediates R-G-D-dependent release of transforming growth factor beta-1 (TGF-beta-1) from regulatory Latency-associated peptide (LAP), thereby playing a key role in TGF-beta-1 activation. The chain is Integrin beta-6 (ITGB6) from Cavia porcellus (Guinea pig).